The following is a 436-amino-acid chain: Sulfopropanediol 3-dehydrogenase (436 aa).

Positions 118, 180, and 203 each coordinate NAD(+). Positions 248 and 251 each coordinate Zn(2+). Residues E318 and H319 each act as proton acceptor in the active site. Residues D352 and H411 each contribute to the Zn(2+) site.

This sequence belongs to the histidinol dehydrogenase family. HpsN subfamily. Zn(2+) is required as a cofactor.

The enzyme catalyses (2R)-3-sulfopropanediol + 2 NAD(+) + H2O = (2R)-3-sulfolactate + 2 NADH + 3 H(+). Its function is as follows. Catalyzes the NAD-dependent oxidation of (R)-2,3-dihydroxypropane-1-sulfonate to (R)-3-sulfolactate. The chain is Sulfopropanediol 3-dehydrogenase from Cupriavidus pinatubonensis (strain JMP 134 / LMG 1197) (Cupriavidus necator (strain JMP 134)).